The primary structure comprises 584 residues: MKMMLVRRFRVLILMVFLVACALHIALDLLPRLERRGARPSGEPGCSCAQPAAEVAAPGWAQVRGRPGEPPAASSAAGDAGWPNKHTLRILQDFSSDPSSNLSSHSLEKLPPAAEPAERALRGRDPGALRPHDPAHRPLLRDPGPRRSESPPGPGGDASLLARLFEHPLYRVAVPPLTEEDVLFNVNSDTRLSPKAAENPDWPHAGAEGAEFLSPGEAAVDSYPNWLKFHIGINRYELYSRHNPAIEALLHDLSSQRITSVAMKSGGTQLKLIMTFQNYGQALFKPMKQTREQETPPDFFYFSDYERHNAEIAAFHLDRILDFRRVPPVAGRMVNMTKEIRDVTRDKKLWRTFFISPANNICFYGECSYYCSTEHALCGKPDQIEGSLAAFLPDLSLAKRKTWRNPWRRSYHKRKKAEWEVDPDYCEEVKQTPPYDSSHRILDVMDMTIFDFLMGNMDRHHYETFEKFGNETFIIHLDNGRGFGKYSHDELSILVPLQQCCRIRKSTYLRLQLLAKEEYKLSLLMAESLRGDQVAPVLYQPHLEALDRRLRVVLKAVRDCVERNGLHSVVDDDLDTEHRAASAR.

Residues 1–10 are Cytoplasmic-facing; it reads MKMMLVRRFR. A propeptide spanning residues 1–92 is cleaved from the precursor; it reads MKMMLVRRFR…PNKHTLRILQ (92 aa). A helical; Signal-anchor for type II membrane protein membrane pass occupies residues 11–31; the sequence is VLILMVFLVACALHIALDLLP. Topologically, residues 32 to 584 are lumenal; the sequence is RLERRGARPS…DTEHRAASAR (553 aa). Disordered stretches follow at residues 62–81 and 94–159; these read QVRGRPGEPPAASSAAGDAG and FSSD…GDAS. Low complexity-rich tracts occupy residues 71–81 and 95–112; these read PAASSAAGDAG and SSDPSSNLSSHSLEKLPP. Asparagine 101 carries N-linked (GlcNAc...) asparagine glycosylation. Position 106 is a phosphoserine (serine 106). Residues 116–149 are compositionally biased toward basic and acidic residues; that stretch reads PAERALRGRDPGALRPHDPAHRPLLRDPGPRRSE. Glutamine 269, lysine 285, and glutamate 306 together coordinate ATP. Mn(2+) is bound at residue glutamate 306. Asparagine 335 carries an N-linked (GlcNAc...) asparagine glycan. The kinase domain stretch occupies residues 354–565; it reads FISPANNICF…AVRDCVERNG (212 aa). 2 disulfide bridges follow: cysteine 362–cysteine 378 and cysteine 367–cysteine 371. Position 389 to 392 (389 to 392) interacts with ATP; that stretch reads AAFL. Cystine bridges form between cysteine 426/cysteine 500 and cysteine 501/cysteine 560. Aspartate 458 is an active-site residue. Glutamate 463 lines the ATP pocket. N-linked (GlcNAc...) asparagine glycosylation occurs at asparagine 470. Aspartate 478 is an ATP binding site. Aspartate 478 serves as a coordination point for Mn(2+).

This sequence belongs to the FAM20 family. Homodimer; disulfide-linked. Interacts with FAM20A; probably forming a heterotetramer of 2 subunits of FAM20A and 2 subunits of FAM20C. Interacts with protease MBTPS1/S1P; the interaction results in FAM20C cleavage and secretion. Interacts with COPII components SEC23A and SEC24A; transport of FAM20C from the endoplasmic reticulum to the Golgi is likely to be mediated by COPII vesicles. Requires Mn(2+) as cofactor. N-glycosylation is required for folding. In terms of processing, autophosphorylated. Post-translationally, propeptide cleavage by MBTPS1/S1P promotes FAM20C secretion and maximal kinase activity which is essential for efficient osteoblast differentiation and biomineralization. Widely expressed.

It is found in the golgi apparatus membrane. The protein localises to the secreted. Its subcellular location is the endoplasmic reticulum. The catalysed reaction is L-seryl-[protein] + ATP = O-phospho-L-seryl-[protein] + ADP + H(+). It catalyses the reaction L-threonyl-[protein] + ATP = O-phospho-L-threonyl-[protein] + ADP + H(+). Serine/threonine protein kinase activity is increased upon interaction with FAM20A. Functionally, golgi serine/threonine protein kinase that phosphorylates secretory pathway proteins within Ser-x-Glu/pSer motifs and plays a key role in biomineralization of bones and teeth. Constitutes the main protein kinase for extracellular proteins, generating the majority of the extracellular phosphoproteome. Mainly phosphorylates proteins within the Ser-x-Glu/pSer motif, but also displays a broader substrate specificity. Phosphorylates ERO1A, enhancing its activity which is required to maintain endoplasmic reticulum redox homeostasis and for oxidative protein folding. During endoplasmic reticulum stress, phosphorylates P4HB/PDIA1 which induces a functional switch, causing P4HB to change from an oxidoreductase to a molecular chaperone. This is critical to maintain ER proteostasis and reduce cell death under ER stress. Phosphorylation of P4HB also promotes its interaction with ERN1, leading to reduced activity of ERN1, a key sensor for the endoplasmic reticulum unfolded protein response. Required for osteoblast differentiation and mineralization. Phosphorylates casein as well as a number of proteins involved in biomineralization such as AMELX, AMTN, ENAM and SPP1/OPN. In addition to its role in biomineralization, also plays a role in lipid homeostasis, wound healing and cell migration and adhesion. This is Extracellular serine/threonine protein kinase FAM20C from Homo sapiens (Human).